The primary structure comprises 310 residues: Putative sugar kinase PH1459 (310 aa).

ATP contacts are provided by K194, T219, and G224.

This sequence belongs to the carbohydrate kinase PfkB family.

In Pyrococcus horikoshii (strain ATCC 700860 / DSM 12428 / JCM 9974 / NBRC 100139 / OT-3), this protein is Putative sugar kinase PH1459.